The chain runs to 387 residues: Dual specificity protein phosphatase MPK-4 (387 aa).

Positions 1–15 (MEQSQSQRQAWPSSS) are enriched in polar residues. Positions 1–27 (MEQSQSQRQAWPSSSAGGGKAQDSGVL) are disordered. The Tyrosine-protein phosphatase domain occupies 35 to 182 (GPVSIDEVDT…LKLFRRMGCK (148 aa)). The active-site Phosphocysteine intermediate is the C126. Residues 248–267 (LEHKPRDRPPQEVVPKEKEE) form a disordered region.

The protein belongs to the protein-tyrosine phosphatase family. Non-receptor class dual specificity subfamily. Interacts (via tyrosine-protein phosphatase domain) with bsk/JNK; the interaction dephosphorylates bsk.

The protein resides in the nucleus. It localises to the cytoplasm. The catalysed reaction is O-phospho-L-tyrosyl-[protein] + H2O = L-tyrosyl-[protein] + phosphate. It catalyses the reaction O-phospho-L-seryl-[protein] + H2O = L-seryl-[protein] + phosphate. The enzyme catalyses O-phospho-L-threonyl-[protein] + H2O = L-threonyl-[protein] + phosphate. Its activity is regulated as follows. Inhibited by the tyrosine phosphatase inhibitor sodium vanadate. In terms of biological role, dual specificity phosphatase; can dephosphorylate both phosphotyrosine and phosphoserine or phosphothreonine residues. May suppress bsk/JNK activation during the immune response. This chain is Dual specificity protein phosphatase MPK-4, found in Drosophila melanogaster (Fruit fly).